Reading from the N-terminus, the 352-residue chain is Protein Wnt-3a (352 aa).

An N-terminal signal peptide occupies residues 1-18 (MGCFGYLLLIIGLHQVLA). Disulfide bonds link cysteine 77–cysteine 88, cysteine 128–cysteine 136, cysteine 138–cysteine 155, cysteine 203–cysteine 217, cysteine 205–cysteine 212, cysteine 297–cysteine 312, cysteine 327–cysteine 342, cysteine 329–cysteine 339, and cysteine 334–cysteine 335. N-linked (GlcNAc...) asparagine glycosylation is present at asparagine 87. Serine 209 carries O-palmitoleoyl serine lipidation. N-linked (GlcNAc...) asparagine glycosylation occurs at asparagine 298.

It belongs to the Wnt family. Disulfide bonds have critical and distinct roles in secretion and activity. Loss of each conserved cysteine results in high molecular weight oxidized Wnt oligomers, which are formed through inter-Wnt disulfide bonding. In terms of processing, palmitoleoylation is required for efficient binding to frizzled receptors. Depalmitoleoylation leads to Wnt signaling pathway inhibition. At neurula in anterior neural fold; at tailbud in dorsal midline of midbrain.

The protein localises to the secreted. It localises to the extracellular space. The protein resides in the extracellular matrix. Ligand for members of the frizzled family of seven transmembrane receptors. Functions in the canonical Wnt signaling pathway that results in activation of transcription factors of the TCF/LEF family. Required for normal embryonic mesoderm development and formation of caudal somites. Required for normal morphogenesis of the developing neural tube. The protein is Protein Wnt-3a (wnt3a) of Xenopus laevis (African clawed frog).